Consider the following 326-residue polypeptide: Vestitone reductase (326 aa).

NADP(+) is bound by residues 12-18 (GGTGFLG), Arg37, and Tyr164.

It belongs to the NAD(P)-dependent epimerase/dehydratase family. Dihydroflavonol-4-reductase subfamily. As to quaternary structure, monomer. In terms of tissue distribution, detected in roots, and at lower levels in root nodules. Not detected in petioles, leaf and stem.

It catalyses the reaction a (3R,4R)-4,2'-dihydroxyisoflavan + NADP(+) = a (3R)-2'-hydroxyisoflavanone + NADPH + H(+). With respect to regulation, inhibited by vestitone concentrations above 50 uM. In terms of biological role, stereospecific enzyme that catalyzes the NADPH-dependent reduction of (3R)-vestitone to (3R,4R)-4'-methoxyisoflavan-2',4,7-triol (DMI). Has no activity with (3S)-vestitone. Catalyzes the penultimate step in the biosynthesis of the phytoalexin medicarpin, and thereby contributes to plant defense reactions. This Medicago sativa (Alfalfa) protein is Vestitone reductase.